Here is a 503-residue protein sequence, read N- to C-terminus: Maturase K (503 aa).

It belongs to the intron maturase 2 family. MatK subfamily.

The protein localises to the plastid. Its subcellular location is the chloroplast. In terms of biological role, usually encoded in the trnK tRNA gene intron. Probably assists in splicing its own and other chloroplast group II introns. The chain is Maturase K from Rosa californica (California wild rose).